Reading from the N-terminus, the 215-residue chain is MMSLILYGYWRSSAAYRVRIALNIKQLVYESRAVHLSREGGEQHHAEFHRLNPSELIPVLIDGELCLNQSLAIIEYLDETYPAPRLIPERGAERYQVKALALDIAADIHPINNLRILQYLTAKLGVADEEKNRWYRHWIDKGFQGLEEKLRHTAGEYCVGNRLSLVDVCLVPQVYNAERFDLDMSRYPTLQQIAARLRALPAFAQAAPENQPDAC.

In terms of domain architecture, GST N-terminal spans 2–85 (MSLILYGYWR…YLDETYPAPR (84 aa)). A GST C-terminal domain is found at 90–215 (RGAERYQVKA…AAPENQPDAC (126 aa)).

The protein belongs to the GST superfamily. Zeta family.

The enzyme catalyses 4-maleylacetoacetate = 4-fumarylacetoacetate. The protein operates within amino-acid degradation; L-phenylalanine degradation; acetoacetate and fumarate from L-phenylalanine: step 5/6. This chain is Probable maleylacetoacetate isomerase (maiA), found in Vibrio cholerae serotype O1 (strain ATCC 39315 / El Tor Inaba N16961).